The primary structure comprises 780 residues: Kojibiose phosphorylase (780 aa).

354-355 (WD) lines the substrate pocket. Catalysis depends on E496, which acts as the Proton donor. 608–609 (KQ) serves as a coordination point for substrate.

This sequence belongs to the glycosyl hydrolase 65 family.

It catalyses the reaction kojibiose + phosphate = beta-D-glucose 1-phosphate + D-glucose. Its function is as follows. Catalyzes the reversible phosphorolysis of kojibiose into beta-D-glucose 1-phosphate (Glc1P) and D-glucose. In the reverse direction, uses Glc1P as acceptor to produce alpha-1,2-glucans up to a degree of polymerization of 6. This is Kojibiose phosphorylase from Halothermothrix orenii (strain H 168 / OCM 544 / DSM 9562).